The chain runs to 357 residues: Probable dual-specificity RNA methyltransferase RlmN (357 aa).

Catalysis depends on Glu92, which acts as the Proton acceptor. Positions 98–330 constitute a Radical SAM core domain; that stretch reads QEYGLSVCVT…KKNGINCVIR (233 aa). Residues Cys105 and Cys341 are joined by a disulfide bond. 3 residues coordinate [4Fe-4S] cluster: Cys112, Cys116, and Cys119. S-adenosyl-L-methionine contacts are provided by residues 164–165, Ser196, 219–221, and Asn297; these read GE and SLH. The S-methylcysteine intermediate role is filled by Cys341.

The protein belongs to the radical SAM superfamily. RlmN family. The cofactor is [4Fe-4S] cluster.

Its subcellular location is the cytoplasm. It carries out the reaction adenosine(2503) in 23S rRNA + 2 reduced [2Fe-2S]-[ferredoxin] + 2 S-adenosyl-L-methionine = 2-methyladenosine(2503) in 23S rRNA + 5'-deoxyadenosine + L-methionine + 2 oxidized [2Fe-2S]-[ferredoxin] + S-adenosyl-L-homocysteine. It catalyses the reaction adenosine(37) in tRNA + 2 reduced [2Fe-2S]-[ferredoxin] + 2 S-adenosyl-L-methionine = 2-methyladenosine(37) in tRNA + 5'-deoxyadenosine + L-methionine + 2 oxidized [2Fe-2S]-[ferredoxin] + S-adenosyl-L-homocysteine. In terms of biological role, specifically methylates position 2 of adenine 2503 in 23S rRNA and position 2 of adenine 37 in tRNAs. This chain is Probable dual-specificity RNA methyltransferase RlmN, found in Enterococcus faecalis (strain ATCC 700802 / V583).